A 468-amino-acid polypeptide reads, in one-letter code: ATP synthase subunit beta (468 aa).

Position 155-162 (155-162 (GGAGVGKT)) interacts with ATP.

The protein belongs to the ATPase alpha/beta chains family. As to quaternary structure, F-type ATPases have 2 components, CF(1) - the catalytic core - and CF(0) - the membrane proton channel. CF(1) has five subunits: alpha(3), beta(3), gamma(1), delta(1), epsilon(1). CF(0) has three main subunits: a(1), b(2) and c(9-12). The alpha and beta chains form an alternating ring which encloses part of the gamma chain. CF(1) is attached to CF(0) by a central stalk formed by the gamma and epsilon chains, while a peripheral stalk is formed by the delta and b chains.

It is found in the cell membrane. It carries out the reaction ATP + H2O + 4 H(+)(in) = ADP + phosphate + 5 H(+)(out). Produces ATP from ADP in the presence of a proton gradient across the membrane. The catalytic sites are hosted primarily by the beta subunits. In Streptococcus pyogenes serotype M49 (strain NZ131), this protein is ATP synthase subunit beta.